A 320-amino-acid chain; its full sequence is Malate dehydrogenase (320 aa).

Residues 10 to 15 (GAGQIG) and Asp-34 contribute to the NAD(+) site. Substrate contacts are provided by Arg-83 and Arg-89. NAD(+)-binding positions include Asn-96 and 119 to 121 (ITN). Positions 121 and 152 each coordinate substrate. His-176 serves as the catalytic Proton acceptor.

It belongs to the LDH/MDH superfamily. MDH type 3 family.

The enzyme catalyses (S)-malate + NAD(+) = oxaloacetate + NADH + H(+). In terms of biological role, catalyzes the reversible oxidation of malate to oxaloacetate. The polypeptide is Malate dehydrogenase (Beijerinckia indica subsp. indica (strain ATCC 9039 / DSM 1715 / NCIMB 8712)).